The following is a 143-amino-acid chain: Transcription antitermination protein NusB (143 aa).

It belongs to the NusB family.

In terms of biological role, involved in transcription antitermination. Required for transcription of ribosomal RNA (rRNA) genes. Binds specifically to the boxA antiterminator sequence of the ribosomal RNA (rrn) operons. In Clostridium botulinum (strain ATCC 19397 / Type A), this protein is Transcription antitermination protein NusB.